We begin with the raw amino-acid sequence, 266 residues long: GATA zinc finger domain-containing protein 1 (266 aa).

Residues 9–33 (CSMCKTTSSSMWKKSPQGEILCHHC) form a GATA-type zinc finger. The segment covering 59–72 (TTTFATTSAGPSQS) has biased composition (low complexity). Residues 59–112 (TTTFATTSAGPSQSNGGGGGKQSKQEIHRRSARLRNTKYKSAPAAEKKVSTKGK) form a disordered region. Lysine 259 participates in a covalent cross-link: Glycyl lysine isopeptide (Lys-Gly) (interchain with G-Cter in SUMO2).

Component of a chromatin complex, at least composed of KDM5A, GATAD1 and EMSY. As to expression, expressed in the eye (lens, ciliary body, retina, sclera and conjunctiva) at postnatal day 2 and 10. Not detected anywhere at postnatal day 14.

Its subcellular location is the nucleus. In terms of biological role, component of some chromatin complex recruited to chromatin sites methylated 'Lys-4' of histone H3 (H3K4me), with a preference for trimethylated form (H3K4me3). This chain is GATA zinc finger domain-containing protein 1 (Gatad1), found in Mus musculus (Mouse).